Consider the following 88-residue polypeptide: Exodeoxyribonuclease 7 small subunit (88 aa).

The segment at 68 to 88 (SDPMHPDDGEPFDPSLVSTSQ) is disordered.

This sequence belongs to the XseB family. Heterooligomer composed of large and small subunits.

It is found in the cytoplasm. The catalysed reaction is Exonucleolytic cleavage in either 5'- to 3'- or 3'- to 5'-direction to yield nucleoside 5'-phosphates.. In terms of biological role, bidirectionally degrades single-stranded DNA into large acid-insoluble oligonucleotides, which are then degraded further into small acid-soluble oligonucleotides. In Xylella fastidiosa (strain 9a5c), this protein is Exodeoxyribonuclease 7 small subunit.